The chain runs to 366 residues: Cellular tumor antigen p53 (366 aa).

The tract at residues 1–41 (MMDEQGLDGMQILPGSQDSFSELWASVQTPSIATIAEEFDD) is transcription activation (acidic). The DNA-binding element occupies 80–267 (DYPGEYGFQL…KTDEESSTKT (188 aa)). Cys-154, His-157, Cys-213, and Cys-217 together coordinate Zn(2+). The tract at residues 248-255 (RVCACPGR) is interaction with DNA. A compositionally biased stretch (basic and acidic residues) spans 255 to 264 (RDRKTDEESS). The disordered stretch occupies residues 255–305 (RDRKTDEESSTKTPNGPKQTKKRKQAPSNSAPHTTTVMKSKSSSSAEEEDK). The Bipartite nuclear localization signal motif lies at 275–295 (KKRKQAPSNSAPHTTTVMKSK). Over residues 280–292 (APSNSAPHTTTVM) the composition is skewed to polar residues. The oligomerization stretch occupies residues 305–336 (KEVFTVLVKGRERYEIIKKINEAFEGAAEKEK). The Nuclear export signal signature appears at 319–330 (EIIKKINEAFEG). Residues 332–366 (AEKEKAKNKVAVKQELPVPSSGKRLVQRGERSDSD) form a disordered region. A basic (repression of DNA-binding) region spans residues 341–362 (VAVKQELPVPSSGKRLVQRGER).

The protein belongs to the p53 family. Binds DNA as a homotetramer. Zn(2+) is required as a cofactor.

Its subcellular location is the cytoplasm. The protein resides in the nucleus. Its function is as follows. Multifunctional transcription factor that induces cell cycle arrest, DNA repair or apoptosis upon binding to its target DNA sequence. Acts as a tumor suppressor in many tumor types; induces growth arrest or apoptosis depending on the physiological circumstances and cell type. Negatively regulates cell division by controlling expression of a set of genes required for this process. One of the activated genes is an inhibitor of cyclin-dependent kinases. Apoptosis induction seems to be mediated either by stimulation of BAX and FAS antigen expression, or by repression of Bcl-2 expression. The chain is Cellular tumor antigen p53 (tp53) from Platichthys flesus (European flounder).